We begin with the raw amino-acid sequence, 118 residues long: Fluoride-specific ion channel FluC 1 (118 aa).

2 helical membrane passes run phenylalanine 5 to leucine 25 and phenylalanine 47 to threonine 67. 2 residues coordinate Na(+): glycine 71 and threonine 74. Residues tyrosine 98 to valine 118 form a helical membrane-spanning segment.

This sequence belongs to the fluoride channel Fluc/FEX (TC 1.A.43) family.

It is found in the cell membrane. It carries out the reaction fluoride(in) = fluoride(out). Its activity is regulated as follows. Na(+) is not transported, but it plays an essential structural role and its presence is essential for fluoride channel function. Its function is as follows. Fluoride-specific ion channel. Important for reducing fluoride concentration in the cell, thus reducing its toxicity. This Listeria monocytogenes serovar 1/2a (strain ATCC BAA-679 / EGD-e) protein is Fluoride-specific ion channel FluC 1.